Consider the following 562-residue polypeptide: Acetolactate synthase isozyme 1 large subunit (562 aa).

Thiamine diphosphate is bound at residue glutamate 60. FAD contacts are provided by residues arginine 162, 264-285 (HGVR…LGAR), and 307-326 (DIDR…IQAD). The thiamine pyrophosphate binding stretch occupies residues 393-473 (QHQMWTAQAY…VKIILMNNEA (81 aa)). The Mg(2+) site is built by aspartate 444 and asparagine 471.

It belongs to the TPP enzyme family. Dimer of large and small chains. Mg(2+) is required as a cofactor. Requires thiamine diphosphate as cofactor.

It carries out the reaction 2 pyruvate + H(+) = (2S)-2-acetolactate + CO2. Its pathway is amino-acid biosynthesis; L-isoleucine biosynthesis; L-isoleucine from 2-oxobutanoate: step 1/4. It functions in the pathway amino-acid biosynthesis; L-valine biosynthesis; L-valine from pyruvate: step 1/4. The polypeptide is Acetolactate synthase isozyme 1 large subunit (ilvB) (Escherichia coli (strain K12)).